A 206-amino-acid chain; its full sequence is Large ribosomal subunit protein uL4 (206 aa).

Residues 63–93 (MYKQKGTGRARHHSARAPQFRGGGKAHGPVV) are disordered. The span at 64–77 (YKQKGTGRARHHSA) shows a compositional bias: basic residues.

This sequence belongs to the universal ribosomal protein uL4 family. Part of the 50S ribosomal subunit.

Its function is as follows. One of the primary rRNA binding proteins, this protein initially binds near the 5'-end of the 23S rRNA. It is important during the early stages of 50S assembly. It makes multiple contacts with different domains of the 23S rRNA in the assembled 50S subunit and ribosome. Functionally, forms part of the polypeptide exit tunnel. The polypeptide is Large ribosomal subunit protein uL4 (Rhizobium meliloti (strain 1021) (Ensifer meliloti)).